Consider the following 236-residue polypeptide: Eukaryotic translation initiation factor 3 subunit J (236 aa).

The segment at 1–84 (MADDWESAAD…LREEEAEAER (84 aa)) is disordered. Acidic residues predominate over residues 28–46 (GEDEDEDIKDSWEDEEEKK). Composition is skewed to basic and acidic residues over residues 47-58 (DEEKPTKTEAPA) and 68-77 (AKLEQQALRE).

This sequence belongs to the eIF-3 subunit J family. As to quaternary structure, component of the eukaryotic translation initiation factor 3 (eIF-3) complex. The eIF-3 complex interacts with pix.

It is found in the cytoplasm. Functionally, component of the eukaryotic translation initiation factor 3 (eIF-3) complex, which is involved in protein synthesis of a specialized repertoire of mRNAs and, together with other initiation factors, stimulates binding of mRNA and methionyl-tRNAi to the 40S ribosome. The eIF-3 complex specifically targets and initiates translation of a subset of mRNAs involved in cell proliferation. The protein is Eukaryotic translation initiation factor 3 subunit J of Drosophila sechellia (Fruit fly).